Consider the following 142-residue polypeptide: Hemoglobin subunit alpha (142 aa).

The 141-residue stretch at Val2–Arg142 folds into the Globin domain. Ser4 carries the phosphoserine modification. Residue Lys8 is modified to N6-succinyllysine. Thr9 is subject to Phosphothreonine. Lys12 bears the N6-succinyllysine mark. Lys17 is modified (N6-acetyllysine; alternate). The residue at position 17 (Lys17) is an N6-succinyllysine; alternate. At Tyr25 the chain carries Phosphotyrosine. At Ser36 the chain carries Phosphoserine. N6-succinyllysine is present on Lys41. Ser50 carries the phosphoserine modification. O2 is bound at residue His59. Residue His88 coordinates heme b. At Ser103 the chain carries Phosphoserine. At Thr109 the chain carries Phosphothreonine. Ser125 and Ser132 each carry phosphoserine. Residues Thr135 and Thr138 each carry the phosphothreonine modification. Ser139 is subject to Phosphoserine.

The protein belongs to the globin family. Heterotetramer of two alpha chains and two beta chains. As to expression, red blood cells.

Functionally, involved in oxygen transport from the lung to the various peripheral tissues. In terms of biological role, hemopressin acts as an antagonist peptide of the cannabinoid receptor CNR1. Hemopressin-binding efficiently blocks cannabinoid receptor CNR1 and subsequent signaling. The polypeptide is Hemoglobin subunit alpha (HBA) (Piliocolobus badius (Western red colobus)).